The primary structure comprises 263 residues: Isoprenyl transferase (263 aa).

The active site involves aspartate 26. Residue aspartate 26 participates in Mg(2+) binding. Residues 27-30 (GNGR), tryptophan 31, arginine 39, histidine 43, and 71-73 (SSE) contribute to the substrate site. Asparagine 74 serves as the catalytic Proton acceptor. Residues tryptophan 75, arginine 77, arginine 191, and 197–199 (RIS) contribute to the substrate site. A Mg(2+)-binding site is contributed by glutamate 210. The tract at residues 241 to 263 (GRTSEQIAGQQENKNTVSNEDRV) is disordered. The segment covering 243–263 (TSEQIAGQQENKNTVSNEDRV) has biased composition (polar residues).

The protein belongs to the UPP synthase family. Homodimer. The cofactor is Mg(2+).

In terms of biological role, catalyzes the condensation of isopentenyl diphosphate (IPP) with allylic pyrophosphates generating different type of terpenoids. The protein is Isoprenyl transferase of Nitrosomonas europaea (strain ATCC 19718 / CIP 103999 / KCTC 2705 / NBRC 14298).